The following is a 431-amino-acid chain: SH2 domain-containing protein 4B (431 aa).

The disordered stretch occupies residues Gln201–Tyr235. A compositionally biased stretch (basic and acidic residues) spans Glu211–Tyr235. In terms of domain architecture, SH2 spans Trp325–Cys417.

This is SH2 domain-containing protein 4B (Sh2d4b) from Mus musculus (Mouse).